The following is a 261-amino-acid chain: Small ribosomal subunit protein uS2 (261 aa).

Ser2 carries the N-acetylserine modification. The disordered stretch occupies residues 215 to 261 (AEEAKTTEDVEEAAPVDADEWTGETEEVDWAESGATPAVEDAAASNW). Over residues 223-244 (DVEEAAPVDADEWTGETEEVDW) the composition is skewed to acidic residues.

This sequence belongs to the universal ribosomal protein uS2 family. In terms of assembly, component of the small ribosomal subunit. Mature ribosomes consist of a small (40S) and a large (60S) subunit. The 40S subunit contains about 33 different proteins and 1 molecule of RNA (18S). The 60S subunit contains about 49 different proteins and 3 molecules of RNA (25S, 5.8S and 5S). Interacts with RPS21.

The protein localises to the cytoplasm. Its function is as follows. Required for the assembly and/or stability of the 40S ribosomal subunit. Required for the processing of the 20S rRNA-precursor to mature 18S rRNA in a late step of the maturation of 40S ribosomal subunits. The polypeptide is Small ribosomal subunit protein uS2 (Scheffersomyces stipitis (strain ATCC 58785 / CBS 6054 / NBRC 10063 / NRRL Y-11545) (Yeast)).